The following is a 260-amino-acid chain: WUSCHEL-related homeobox 2 (260 aa).

A DNA-binding region (homeobox; WUS-type) is located at residues 10 to 74; that stretch reads ASSSRWNPTK…NHKARQRQKQ (65 aa).

The protein belongs to the WUS homeobox family.

Its subcellular location is the nucleus. Its function is as follows. Probable transcription factor involved in embryonic patterning. Required for apical embryo development after fertilization. Its specific localization to the apical daughter cell of the zygote, while WOX8 is confined to the basal cell, suggests that the asymmetric division of the plant zygote separates determinants of apical and basal cell fates. This is WUSCHEL-related homeobox 2 (WOX2) from Arabidopsis thaliana (Mouse-ear cress).